Consider the following 190-residue polypeptide: Transcription factor E (190 aa).

The HTH TFE/IIEalpha-type domain occupies 4 to 87; it reads KNKALLEIAK…YWHLETKRLP (84 aa). A disordered region spans residues 170–190; sequence PSPKKEKKKTRAKAKRKTRKK. Residues 174–190 are compositionally biased toward basic residues; sequence KEKKKTRAKAKRKTRKK.

It belongs to the TFE family. In terms of assembly, monomer. Interaction with RNA polymerase subunits RpoF and RpoE is necessary for Tfe stimulatory transcription activity. Able to interact with Tbp and RNA polymerase in the absence of DNA promoter. Interacts both with the preinitiation and elongation complexes.

In terms of biological role, transcription factor that plays a role in the activation of archaeal genes transcribed by RNA polymerase. Facilitates transcription initiation by enhancing TATA-box recognition by TATA-box-binding protein (Tbp), and transcription factor B (Tfb) and RNA polymerase recruitment. Not absolutely required for transcription in vitro, but particularly important in cases where Tbp or Tfb function is not optimal. It dynamically alters the nucleic acid-binding properties of RNA polymerases by stabilizing the initiation complex and destabilizing elongation complexes. Seems to translocate with the RNA polymerase following initiation and acts by binding to the non template strand of the transcription bubble in elongation complexes. This Pyrococcus abyssi (strain GE5 / Orsay) protein is Transcription factor E.